The primary structure comprises 143 residues: Nucleoside diphosphate kinase (143 aa).

ATP-binding residues include K11, F59, R87, T93, R104, and N114. H117 (pros-phosphohistidine intermediate) is an active-site residue.

It belongs to the NDK family. As to quaternary structure, homotetramer. Requires Mg(2+) as cofactor.

Its subcellular location is the cytoplasm. The enzyme catalyses a 2'-deoxyribonucleoside 5'-diphosphate + ATP = a 2'-deoxyribonucleoside 5'-triphosphate + ADP. The catalysed reaction is a ribonucleoside 5'-diphosphate + ATP = a ribonucleoside 5'-triphosphate + ADP. Major role in the synthesis of nucleoside triphosphates other than ATP. The ATP gamma phosphate is transferred to the NDP beta phosphate via a ping-pong mechanism, using a phosphorylated active-site intermediate. This chain is Nucleoside diphosphate kinase, found in Colwellia psychrerythraea (strain 34H / ATCC BAA-681) (Vibrio psychroerythus).